We begin with the raw amino-acid sequence, 44 residues long: Poly-ADP-ribosylation-amplifying and CtIP-maintaining micropeptide (44 aa).

The interval 1 to 44 (MAASGGTKKAQSGGRRLREPSSRPSRRARQRPRRGALRKAGRFL) is disordered. The span at 24 to 44 (PSRRARQRPRRGALRKAGRFL) shows a compositional bias: basic residues.

Interacts with KLHL15; preventing ubiquitination and degradation of RBBP8/CtIP. Interacts with PARP1.

It localises to the nucleus. The protein localises to the nucleolus. It is found in the chromosome. Micropeptide that acts as a regulator of DNA repair both by preventing KLHL15-mediated ubiquitination and degradation of RBBP8/CtIP, and by promoting the poly-ADP-ribosyltransferase activity of PARP1. Prevents KLHL15-mediated ubiquitination of RBBP8/CtIP by competitively blocking the association between KLHL15 and RBBP8/CtIP. Recruited to DNA damage sites via association with poly-ADP-ribose chains, and enhances the poly-ADP-ribosyltransferase activity of PARP1. The polypeptide is Poly-ADP-ribosylation-amplifying and CtIP-maintaining micropeptide (Homo sapiens (Human)).